Reading from the N-terminus, the 674-residue chain is Putative kinase-like protein TMKL1 (674 aa).

An N-terminal signal peptide occupies residues 1–25 (MGMEALRFLHVIFFFVLILHCHCGT). Residues 26 to 295 (SLSGSSDVKL…PLKPCLGSSR (270 aa)) lie on the Extracellular side of the membrane. N-linked (GlcNAc...) asparagine glycans are attached at residues asparagine 57, asparagine 90, asparagine 95, and asparagine 110. LRR repeat units follow at residues 100–122 (HLLS…IGEF), 124–146 (MLQS…LGYT), 148–169 (SLSD…SIWN), and 173–194 (KLVS…PALP). Residues asparagine 183 and asparagine 195 are each glycosylated (N-linked (GlcNAc...) asparagine). 3 LRR repeats span residues 200 to 222 (NLQV…ITRF), 224 to 244 (GVKS…EGLG), and 247 to 269 (ELES…GESK). 2 N-linked (GlcNAc...) asparagine glycosylation sites follow: asparagine 252 and asparagine 257. Residues 296–323 (LSPGAVAGLVIGLMSGAVVVASLLIGYL) form a helical membrane-spanning segment. Residues 324 to 674 (QNKKRKSSIE…ETRSDAETPF (351 aa)) lie on the Cytoplasmic side of the membrane. Positions 331–350 (SIESEDDLEEGDEEDEIGEK) are disordered. The segment covering 333–348 (ESEDDLEEGDEEDEIG) has biased composition (acidic residues). Serine 334 bears the Phosphoserine mark. The Protein kinase domain occupies 373 to 674 (NATGQVMEKT…ETRSDAETPF (302 aa)). Threonine 375 bears the Phosphothreonine mark. Serine 454 carries the phosphoserine modification. Residues 649-674 (LEENRPRNRSALYSPTETRSDAETPF) form a disordered region.

The protein belongs to the protein kinase superfamily.

The protein resides in the membrane. In terms of biological role, does not seem to have conserved a kinase activity. The sequence is that of Putative kinase-like protein TMKL1 (TMKL1) from Arabidopsis thaliana (Mouse-ear cress).